The sequence spans 275 residues: NH(3)-dependent NAD(+) synthetase (275 aa).

Position 50–57 (50–57) interacts with ATP; it reads GISGGVDS. Asp56 serves as a coordination point for Mg(2+). Position 147 (Arg147) interacts with deamido-NAD(+). Residue Thr167 participates in ATP binding. Glu172 lines the Mg(2+) pocket. Deamido-NAD(+) contacts are provided by Lys180 and Asp187. Residues Lys196 and Thr218 each coordinate ATP. 267–268 lines the deamido-NAD(+) pocket; the sequence is HK.

It belongs to the NAD synthetase family. As to quaternary structure, homodimer.

It carries out the reaction deamido-NAD(+) + NH4(+) + ATP = AMP + diphosphate + NAD(+) + H(+). Its pathway is cofactor biosynthesis; NAD(+) biosynthesis; NAD(+) from deamido-NAD(+) (ammonia route): step 1/1. Catalyzes the ATP-dependent amidation of deamido-NAD to form NAD. Uses ammonia as a nitrogen source. In Pseudomonas syringae pv. syringae (strain B728a), this protein is NH(3)-dependent NAD(+) synthetase.